The following is a 547-amino-acid chain: Phosphomethylpyrimidine synthase (547 aa).

Residues Met-1–Thr-15 show a composition bias toward polar residues. Positions Met-1 to Ser-36 are disordered. Substrate contacts are provided by residues Asn-150, Met-179, Tyr-208, His-244, Ser-264–Gly-266, Asp-305–Arg-308, and Glu-344. A Zn(2+)-binding site is contributed by His-348. Tyr-371 provides a ligand contact to substrate. His-412 is a binding site for Zn(2+). Positions 492, 495, and 500 each coordinate [4Fe-4S] cluster.

Belongs to the ThiC family. [4Fe-4S] cluster is required as a cofactor.

The enzyme catalyses 5-amino-1-(5-phospho-beta-D-ribosyl)imidazole + S-adenosyl-L-methionine = 4-amino-2-methyl-5-(phosphooxymethyl)pyrimidine + CO + 5'-deoxyadenosine + formate + L-methionine + 3 H(+). The protein operates within cofactor biosynthesis; thiamine diphosphate biosynthesis. In terms of biological role, catalyzes the synthesis of the hydroxymethylpyrimidine phosphate (HMP-P) moiety of thiamine from aminoimidazole ribotide (AIR) in a radical S-adenosyl-L-methionine (SAM)-dependent reaction. The polypeptide is Phosphomethylpyrimidine synthase (Mycobacterium leprae (strain Br4923)).